The primary structure comprises 166 residues: Interleukin-3 (166 aa).

A signal peptide spans 1 to 27 (MVLASSTTSILCMLLPLLMLFHQGLQI). 2 disulfides stabilise this stretch: Cys-43-Cys-106 and Cys-105-Cys-166. N-linked (GlcNAc...) asparagine glycosylation is found at Asn-60 and Asn-70. A disordered region spans residues 145 to 166 (SVSRPPQPTSSSDNFRPMTVEC).

The protein belongs to the IL-3 family. As to quaternary structure, monomer. As to expression, activated T-cells, mast cells, natural killer cells.

It localises to the secreted. Its function is as follows. Cytokine secreted predominantly by activated T-lymphocytes as well as mast cells and osteoblastic cells that controls the production and differentiation of hematopoietic progenitor cells into lineage-restricted cells. Also stimulates mature basophils, eosinophils, and monocytes to become functionally activated. In addition, plays an important role in neural cell proliferation and survival. Participates as well in bone homeostasis and inhibits osteoclast differentiation by preventing NF-kappa-B nuclear translocation and activation. Mechanistically, exerts its biological effects through a receptor composed of IL3RA subunit and a signal transducing subunit IL3RB. Receptor stimulation results in the rapid activation of JAK2 kinase activity leading to STAT5-mediated transcriptional program. Alternatively, contributes to cell survival under oxidative stress in non-hematopoietic systems by activating pathways mediated by PI3K/AKT and ERK. The protein is Interleukin-3 (Il3) of Rattus norvegicus (Rat).